The following is a 540-amino-acid chain: Phosphoenolpyruvate carboxykinase (ATP) (540 aa).

R65 is a substrate binding site. K87 bears the N6-acetyllysine mark. Substrate-binding residues include Y207 and K213. ATP contacts are provided by residues K213, H232, and G248–T256. K213 and H232 together coordinate Mn(2+). D269 is a Mn(2+) binding site. ATP-binding positions include E297, R333, R449–I450, and T455. R333 lines the substrate pocket. K523 carries the N6-acetyllysine modification.

The protein belongs to the phosphoenolpyruvate carboxykinase (ATP) family. As to quaternary structure, monomer. It depends on Mn(2+) as a cofactor.

The protein localises to the cytoplasm. It catalyses the reaction oxaloacetate + ATP = phosphoenolpyruvate + ADP + CO2. The protein operates within carbohydrate biosynthesis; gluconeogenesis. Its function is as follows. Involved in the gluconeogenesis. Catalyzes the conversion of oxaloacetate (OAA) to phosphoenolpyruvate (PEP) through direct phosphoryl transfer between the nucleoside triphosphate and OAA. This is Phosphoenolpyruvate carboxykinase (ATP) from Escherichia coli O7:K1 (strain IAI39 / ExPEC).